Here is a 155-residue protein sequence, read N- to C-terminus: Ribosome maturation factor RimP (155 aa).

Belongs to the RimP family.

The protein resides in the cytoplasm. Functionally, required for maturation of 30S ribosomal subunits. The protein is Ribosome maturation factor RimP of Macrococcus caseolyticus (strain JCSC5402) (Macrococcoides caseolyticum).